The primary structure comprises 358 residues: Snurportin-1 (358 aa).

At Met-1 the chain carries N-acetylmethionine. 2 disordered regions span residues 1 to 39 (MEEL…SSLE) and 69 to 89 (DWTG…EMDL). The segment at 1–65 (MEELSQALAS…LDYVNHARRL (65 aa)) is necessary for interaction with KPNB1 and m3G-cap U1 and U5 snRNP import receptor activity. Residues 1–160 (MEELSQALAS…NRFSSLLPGG (160 aa)) are necessary for interaction with XPO1. 2 stretches are compositionally biased toward polar residues: residues 7-22 (ALAS…NSTA) and 30-39 (QYKSKYSSLE). Positions 11–73 (SFSVSQELNS…RLAEDDWTGM (63 aa)) constitute an IBB domain. Ser-75 bears the Phosphoserine mark. The interaction with m3G-cap structure stretch occupies residues 128 to 130 (GKR). A necessary for binding to the m3G-cap structure region spans residues 210 to 329 (MNSKLPEEEG…DTKEKLTHKA (120 aa)). Over residues 315–341 (KRSQEDTKEKLTHKASENGHYELEHLS) the composition is skewed to basic and acidic residues. Residues 315 to 358 (KRSQEDTKEKLTHKASENGHYELEHLSTPKLRSPPHSSESLMDS) are disordered. Residues 349–358 (PHSSESLMDS) are compositionally biased toward polar residues. Phosphoserine is present on Ser-351.

It belongs to the snurportin family. Component of an import snRNP complex composed of KPNB1, SNUPN, SMN1 and ZNF259. Component of a nuclear export receptor complex composed of KPNB1, Ran, SNUPN and XPO1. Found in a trimeric export complex with SNUPN, Ran and XPO1. Interacts (via IBB domain) with KPNB1; the interaction is direct. Interacts with DDX20, IPO7, SMN1, SNRPB and XPO1. Interacts directly with XPO1. Its interaction with XPO1 and binding to m3G-cap U snRNPs appears to be mutually exclusive. Can form homomers.

Its subcellular location is the nucleus. The protein localises to the cytoplasm. Its function is as follows. Functions as an U snRNP-specific nuclear import adapter. Involved in the trimethylguanosine (m3G)-cap-dependent nuclear import of U snRNPs. Binds specifically to the terminal m3G-cap U snRNAs. The chain is Snurportin-1 (Snupn) from Rattus norvegicus (Rat).